A 183-amino-acid chain; its full sequence is Ribosome-recycling factor (183 aa).

Belongs to the RRF family.

It is found in the cytoplasm. Its function is as follows. Responsible for the release of ribosomes from messenger RNA at the termination of protein biosynthesis. May increase the efficiency of translation by recycling ribosomes from one round of translation to another. This chain is Ribosome-recycling factor, found in Acetivibrio thermocellus (strain ATCC 27405 / DSM 1237 / JCM 9322 / NBRC 103400 / NCIMB 10682 / NRRL B-4536 / VPI 7372) (Clostridium thermocellum).